Here is a 300-residue protein sequence, read N- to C-terminus: F-box associated domain-containing protein sdz-33 (300 aa).

The region spanning 5-51 (PFPILCLPDFVLQKSLKLMGVVEHLCLSILSKNIKQLIATLKGYPKC) is the F-box domain.

In terms of tissue distribution, expressed in D-type motor neuron cell bodies.

Substrate recognition component of E3 ubiquitin-protein ligase complex which mediates the ubiquitination and subsequent proteasomal degradation of target proteins such as mdl-1. Positively regulates axon regeneration by targeting mdl-1 for ubiquitin-mediated degradation; probably thereby reducing levels of mdl-1-mxl-1 heterodimers, allowing free mxl-1 to form complexes with tdpt-1 and thus inhibiting tdpt-1-dependent sumoylation of ets-4. The chain is F-box associated domain-containing protein sdz-33 from Caenorhabditis elegans.